A 436-amino-acid chain; its full sequence is 3-ketoacyl-CoA thiolase (436 aa).

The active-site Acyl-thioester intermediate is the cysteine 99. Residues histidine 392 and cysteine 422 each act as proton acceptor in the active site.

Belongs to the thiolase-like superfamily. Thiolase family. Heterotetramer of two alpha chains (FadJ) and two beta chains (FadI).

It localises to the cytoplasm. The catalysed reaction is an acyl-CoA + acetyl-CoA = a 3-oxoacyl-CoA + CoA. The protein operates within lipid metabolism; fatty acid beta-oxidation. Functionally, catalyzes the final step of fatty acid oxidation in which acetyl-CoA is released and the CoA ester of a fatty acid two carbons shorter is formed. The chain is 3-ketoacyl-CoA thiolase from Shewanella pealeana (strain ATCC 700345 / ANG-SQ1).